Reading from the N-terminus, the 239-residue chain is ATP-dependent dethiobiotin synthetase BioD (239 aa).

Residue 15 to 20 (EIGKTF) participates in ATP binding. T19 serves as a coordination point for Mg(2+). Residue K40 is part of the active site. ATP-binding positions include D57, 118–121 (EGVG), and 178–179 (NH). The Mg(2+) site is built by D57 and E118.

Belongs to the dethiobiotin synthetase family. Homodimer. Mg(2+) is required as a cofactor.

It localises to the cytoplasm. The catalysed reaction is (7R,8S)-7,8-diammoniononanoate + CO2 + ATP = (4R,5S)-dethiobiotin + ADP + phosphate + 3 H(+). It functions in the pathway cofactor biosynthesis; biotin biosynthesis; biotin from 7,8-diaminononanoate: step 1/2. Functionally, catalyzes a mechanistically unusual reaction, the ATP-dependent insertion of CO2 between the N7 and N8 nitrogen atoms of 7,8-diaminopelargonic acid (DAPA, also called 7,8-diammoniononanoate) to form a ureido ring. The chain is ATP-dependent dethiobiotin synthetase BioD from Burkholderia ambifaria (strain ATCC BAA-244 / DSM 16087 / CCUG 44356 / LMG 19182 / AMMD) (Burkholderia cepacia (strain AMMD)).